The sequence spans 504 residues: Maturase K (504 aa).

Belongs to the intron maturase 2 family. MatK subfamily.

It localises to the plastid. The protein resides in the chloroplast. Usually encoded in the trnK tRNA gene intron. Probably assists in splicing its own and other chloroplast group II introns. In Chimaphila umbellata (Pipsissewa), this protein is Maturase K.